We begin with the raw amino-acid sequence, 699 residues long: Transcription factor MYC2 (699 aa).

Residues 25-60 (PWGAASTPPPPPPPPHHHHQQQQQQVLPPPAAAPAA) form a disordered region. The tract at residues 93–158 (IDVSTGASLL…AAPDEAVEEE (66 aa)) is JAZ-interaction domain. Residues 290 to 530 (DISVSKPPPP…EPLNHVEAER (241 aa)) are disordered. A compositionally biased stretch (polar residues) spans 306–321 (HFENGSTSTLTENPSP). 2 stretches are compositionally biased toward low complexity: residues 335–349 (PQRQ…QAQQ) and 387–412 (SSSG…PGSL). Polar residues-rich tracts occupy residues 413–449 (FSQH…NNHP) and 459–472 (SFSS…STGT). A compositionally biased stretch (basic and acidic residues) spans 478–494 (SESDHSDLEASVREVES). Residues 506 to 514 (KRPRKRGRK) carry the Nuclear localization signal motif. Residues 507–516 (RPRKRGRKPA) show a composition bias toward basic residues. A compositionally biased stretch (basic and acidic residues) spans 517–530 (NGREEPLNHVEAER). Residues 520–533 (EEPLNHVEAERQRR) are basic motif; degenerate. A bHLH domain is found at 520 to 569 (EEPLNHVEAERQRREKLNQRFYALRAVVPNVSKMDKASLLGDAISYINEL). Residues 534-569 (EKLNQRFYALRAVVPNVSKMDKASLLGDAISYINEL) form a helix-loop-helix motif region. Residues 582–611 (TLQSQMESLKKERDARPPAPSGGGGDGGAR) form a disordered region.

It belongs to the bHLH protein family. As to quaternary structure, interacts with TIFY3/JAZ1. In terms of tissue distribution, highly expressed in spikelets and floral organs.

Its subcellular location is the nucleus. Its function is as follows. Transcriptional activator involved in jasmonate (JA) signaling pathway during spikelet development. Binds to the G2 region G-box (5'-CACGTG-3') of the MADS1 promoter and thus directly regulates the expression of MADS1. Its function in MADS1 activation is abolished by TIFY3/JAZ1 which directly target MYC2 during spikelet development. This is Transcription factor MYC2 from Oryza sativa subsp. japonica (Rice).